Here is a 382-residue protein sequence, read N- to C-terminus: Succinate--CoA ligase [ADP-forming] subunit beta (382 aa).

The 228-residue stretch at 9–236 folds into the ATP-grasp domain; sequence KEVFADAGIP…DAAEDDLEAK (228 aa). ATP is bound by residues Lys-45, 52-54, Glu-91, Val-94, and Glu-99; that span reads GRG. Mg(2+) is bound by residues Asn-191 and Asp-205. Residues Asn-256 and 313–315 each bind substrate; that span reads GIT.

The protein belongs to the succinate/malate CoA ligase beta subunit family. In terms of assembly, heterotetramer of two alpha and two beta subunits. It depends on Mg(2+) as a cofactor.

The enzyme catalyses succinate + ATP + CoA = succinyl-CoA + ADP + phosphate. The catalysed reaction is GTP + succinate + CoA = succinyl-CoA + GDP + phosphate. It functions in the pathway carbohydrate metabolism; tricarboxylic acid cycle; succinate from succinyl-CoA (ligase route): step 1/1. Succinyl-CoA synthetase functions in the citric acid cycle (TCA), coupling the hydrolysis of succinyl-CoA to the synthesis of either ATP or GTP and thus represents the only step of substrate-level phosphorylation in the TCA. The beta subunit provides nucleotide specificity of the enzyme and binds the substrate succinate, while the binding sites for coenzyme A and phosphate are found in the alpha subunit. This Halobacterium salinarum (strain ATCC 29341 / DSM 671 / R1) protein is Succinate--CoA ligase [ADP-forming] subunit beta.